Reading from the N-terminus, the 409-residue chain is Putative integrase/recombinase y4rA (409 aa).

The 86-residue stretch at 112-197 (SAVEQHVQAY…ALRSFLSYAR (86 aa)) folds into the Core-binding (CB) domain. The 183-residue stretch at 220 to 402 (SIPRAIGRDD…DLDALRTLAL (183 aa)) folds into the Tyr recombinase domain. Residues R260, K284, H354, R357, and H380 contribute to the active site. The active-site O-(3'-phospho-DNA)-tyrosine intermediate is the Y389.

This sequence belongs to the 'phage' integrase family.

This is Putative integrase/recombinase y4rA from Sinorhizobium fredii (strain NBRC 101917 / NGR234).